The sequence spans 243 residues: Probable transcriptional regulatory protein Athe_0816 (243 aa).

It belongs to the TACO1 family.

The protein resides in the cytoplasm. This chain is Probable transcriptional regulatory protein Athe_0816, found in Caldicellulosiruptor bescii (strain ATCC BAA-1888 / DSM 6725 / KCTC 15123 / Z-1320) (Anaerocellum thermophilum).